The chain runs to 346 residues: Dynein regulatory complex protein 9 (346 aa).

The span at 299–308 shows a compositional bias: basic and acidic residues; the sequence is MEKEQREKNA. The segment at 299 to 346 is disordered; that stretch reads MEKEQREKNAATKIQAWWRGTLVRKGPRSKKADKSKKKDGKKGKKKRK. Residues 305–334 enclose the IQ domain; it reads EKNAATKIQAWWRGTLVRKGPRSKKADKSK. Over residues 323 to 346 the composition is skewed to basic residues; it reads KGPRSKKADKSKKKDGKKGKKKRK.

It belongs to the DRC9 family. As to quaternary structure, component of the nexin-dynein regulatory complex (N-DRC). Interacts (via IQ domain) with calmodulin when calcium levels are low. Does not interact with calmodulin in the presence of Ca(2+). Interacts with hsp70 and may form a complex with camk4 and hsp70. Detected in adult testis, and at lower levels in brain, kidney and ovary.

The protein localises to the cytoplasm. It is found in the cell projection. The protein resides in the cilium. It localises to the flagellum. Its subcellular location is the cytoskeleton. The protein localises to the flagellum axoneme. Functionally, component of the nexin-dynein regulatory complex (N-DRC), a key regulator of ciliary/flagellar motility which maintains the alignment and integrity of the distal axoneme and regulates microtubule sliding in motile axonemes. Binds calmodulin when cellular Ca(2+) levels are low and thereby contributes to the regulation of calcium and calmodulin-dependent protein kinase IV (camk4) activity; contributes to the regulation of camk4 signaling cascades. Plays a role in the regulation of definitive hematopoiesis via its effects on camk4. This is Dynein regulatory complex protein 9 from Danio rerio (Zebrafish).